We begin with the raw amino-acid sequence, 293 residues long: 4-hydroxy-tetrahydrodipicolinate synthase (293 aa).

T45 provides a ligand contact to pyruvate. Residue Y133 is the Proton donor/acceptor of the active site. The active-site Schiff-base intermediate with substrate is the K161. Residue I203 participates in pyruvate binding.

The protein belongs to the DapA family. In terms of assembly, homotetramer; dimer of dimers.

It is found in the cytoplasm. The enzyme catalyses L-aspartate 4-semialdehyde + pyruvate = (2S,4S)-4-hydroxy-2,3,4,5-tetrahydrodipicolinate + H2O + H(+). It participates in amino-acid biosynthesis; L-lysine biosynthesis via DAP pathway; (S)-tetrahydrodipicolinate from L-aspartate: step 3/4. Its function is as follows. Catalyzes the condensation of (S)-aspartate-beta-semialdehyde [(S)-ASA] and pyruvate to 4-hydroxy-tetrahydrodipicolinate (HTPA). The polypeptide is 4-hydroxy-tetrahydrodipicolinate synthase (Aliivibrio fischeri (strain ATCC 700601 / ES114) (Vibrio fischeri)).